A 92-amino-acid chain; its full sequence is UPF0335 protein BMEI0289 (92 aa).

The protein belongs to the UPF0335 family.

The chain is UPF0335 protein BMEI0289 from Brucella melitensis biotype 1 (strain ATCC 23456 / CCUG 17765 / NCTC 10094 / 16M).